The chain runs to 509 residues: Cytochrome P450 monooxygenase ARMGADRAFT_974139 (509 aa).

A helical transmembrane segment spans residues 4-24 (ASLAVVVWAILLVLWLRRIFG). Residues Asn96 and Asn279 are each glycosylated (N-linked (GlcNAc...) asparagine). Cys439 is a binding site for heme.

Belongs to the cytochrome P450 family. Requires heme as cofactor.

It localises to the membrane. It functions in the pathway secondary metabolite biosynthesis. Its function is as follows. Cytochrome P450 monooxygenase, part of the gene cluster that mediates the biosynthesis of melleolides, a range of antifungal and phytotoxic polyketide derivatives composed of an orsellinic acid (OA) moiety esterified to various sesquiterpene alcohols. The first step in melleolides biosynthesis is performed by the delta(6)-protoilludene synthase PRO1 which catalyzes the cyclization of farnesyl diphosphate to protoilludene. The orsellinic acid synthase armB produces OA by condensing acetyl-CoA with 3 malonyl-CoA units in a three-round chain elongation reaction folowed by a C2-C7 ring closure. ArmB further catalyzes the trans-esterification of OA to the various sesquiterpene alcohols resulting from the hydroxylation of protoilludene. The melleolides cluster also includes 5 cytochrome P450 monooxygenases, 4 NAD(+)-dependent oxidoreductases, one flavin-dependent oxidoreductase, and one O-methyltransferase. The cytochrome P450 monooxygenases may be involved in protoilludene hydroxylation to elaborate melleolides with multiple alcohol groups, such as melleolide D, which carries alcohol functionalities at C-4, C-5, C-10, and C-13. The role of the NAD(+)-dependent enzymes remains unknown. Numerous melleolides, including arnamial, show 5'-O-methylation of the aromatic moiety which may be catalyzed by the methyltransferase encoded in the cluster. The flavin-dependent oxidoreductase might represent the dehydrogenase yielding the aldehyde in position 1 of arnamial and other melleolides. Finally, several halogenase localized outside of the cluster, are able to catalyze the transfer of a single chlorine atom to the melleolide backbone, resulting in a 6'-chloromelleolide product. In Armillaria gallica (Bulbous honey fungus), this protein is Cytochrome P450 monooxygenase ARMGADRAFT_974139.